A 185-amino-acid chain; its full sequence is Uroplakin-2 (185 aa).

Residues Met1–Ala26 form the signal peptide. Positions Asp27–Arg85 are excised as a propeptide. N-linked (GlcNAc...) asparagine glycosylation is found at Asn29, Asn58, and Asn67. Topologically, residues Glu86–Gly156 are lumenal. The helical transmembrane segment at Met157–Ile177 threads the bilayer. The Cytoplasmic segment spans residues Ala178–Lys185.

The protein belongs to the uroplakin-2 family. As to quaternary structure, interacts with uroplakin-1a (UPK1A). In terms of tissue distribution, bladder epithelium.

The protein resides in the cell membrane. Component of the asymmetric unit membrane (AUM); a highly specialized biomembrane elaborated by terminally differentiated urothelial cells. May play an important role in regulating the assembly of the AUM. The chain is Uroplakin-2 (UPK2) from Bos taurus (Bovine).